We begin with the raw amino-acid sequence, 383 residues long: 8-amino-7-oxononanoate synthase (383 aa).

Arg21 lines the substrate pocket. 108–109 (GY) contacts pyridoxal 5'-phosphate. His133 provides a ligand contact to substrate. Pyridoxal 5'-phosphate is bound by residues Ser179, His207, and Thr233. Lys236 is subject to N6-(pyridoxal phosphate)lysine. Thr350 contacts substrate.

It belongs to the class-II pyridoxal-phosphate-dependent aminotransferase family. BioF subfamily. Homodimer. Pyridoxal 5'-phosphate serves as cofactor.

It carries out the reaction 6-carboxyhexanoyl-[ACP] + L-alanine + H(+) = (8S)-8-amino-7-oxononanoate + holo-[ACP] + CO2. It functions in the pathway cofactor biosynthesis; biotin biosynthesis. In terms of biological role, catalyzes the decarboxylative condensation of pimeloyl-[acyl-carrier protein] and L-alanine to produce 8-amino-7-oxononanoate (AON), [acyl-carrier protein], and carbon dioxide. The protein is 8-amino-7-oxononanoate synthase of Photorhabdus laumondii subsp. laumondii (strain DSM 15139 / CIP 105565 / TT01) (Photorhabdus luminescens subsp. laumondii).